A 223-amino-acid chain; its full sequence is MQKQRFCLDTTAITDSDVRKSLGVSNISESAEKIMDIVAQARVQLDISCHIPYNTVYKELIGFLIREECAPETLIKVDTWLVKKTPNRYEIKIPAEIFHEYIKDLRERINKGMRISENAMYETALEAYILSKPDEKDKEDVLNEVLSKTVNSFRDKYRNTLRGGTLDSAPDLDVLLLAKELDAAVVANDEGIEKWAQRLGLRFVNARDFPFILQEYLDLWDKK.

It belongs to the HARP family.

It catalyses the reaction Endonucleolytic cleavage of RNA, removing 5'-extranucleotides from tRNA precursor.. Functionally, RNA-free RNase P that catalyzes the removal of the 5'-leader sequence from pre-tRNA to produce the mature 5'-terminus. This Methanococcus maripaludis (strain C6 / ATCC BAA-1332) protein is RNA-free ribonuclease P.